The following is a 326-amino-acid chain: NADH-quinone oxidoreductase subunit H (326 aa).

8 consecutive transmembrane segments (helical) span residues I11 to F31, V81 to V101, I114 to G134, L154 to F174, L186 to V206, F237 to F257, L265 to I285, and W302 to W322.

It belongs to the complex I subunit 1 family. As to quaternary structure, NDH-1 is composed of 13 different subunits. Subunits NuoA, H, J, K, L, M, N constitute the membrane sector of the complex.

It is found in the cell inner membrane. It carries out the reaction a quinone + NADH + 5 H(+)(in) = a quinol + NAD(+) + 4 H(+)(out). Functionally, NDH-1 shuttles electrons from NADH, via FMN and iron-sulfur (Fe-S) centers, to quinones in the respiratory chain. The immediate electron acceptor for the enzyme in this species is believed to be ubiquinone. Couples the redox reaction to proton translocation (for every two electrons transferred, four hydrogen ions are translocated across the cytoplasmic membrane), and thus conserves the redox energy in a proton gradient. This subunit may bind ubiquinone. The protein is NADH-quinone oxidoreductase subunit H of Cronobacter sakazakii (strain ATCC BAA-894) (Enterobacter sakazakii).